Consider the following 613-residue polypeptide: Serine protease FAM111A (613 aa).

The tract at residues 1 to 72 (MSCKKRKSQI…TRQDQTPPLN (72 aa)) is disordered. A Glycyl lysine isopeptide (Lys-Gly) (interchain with G-Cter in SUMO2) cross-link involves residue Lys-19. Ser-25 bears the Phosphoserine mark. Lys-29 is covalently cross-linked (Glycyl lysine isopeptide (Lys-Gly) (interchain with G-Cter in SUMO2)). The span at 40 to 56 (VDSKKMPRDITNTRDQR) shows a compositional bias: basic and acidic residues. Lys-62 participates in a covalent cross-link: Glycyl lysine isopeptide (Lys-Gly) (interchain with G-Cter in SUMO2). Active-site charge relay system residues include His-383, Asp-437, and Ser-543.

The protein belongs to the FAM111 family. In terms of assembly, interacts (via PIP-box) with PCNA; this interaction is direct. Post-translationally, autocatalytically cleaved; autocatalytic cleavage takes place in trans.

The protein localises to the nucleus. Its subcellular location is the chromosome. The protein resides in the cytoplasm. In terms of biological role, single-stranded DNA-binding serine protease that mediates the proteolytic cleavage of covalent DNA-protein cross-links (DPCs) during DNA synthesis, thereby playing a key role in maintaining genomic integrity. DPCs are highly toxic DNA lesions that interfere with essential chromatin transactions, such as replication and transcription, and which are induced by reactive agents, such as UV light or formaldehyde. Protects replication fork from stalling by removing DPCs, such as covalently trapped topoisomerase 1 (TOP1) adducts on DNA lesion, or poly(ADP-ribose) polymerase 1 (PARP1)-DNA complexes trapped by PARP inhibitors. Required for PCNA loading on replication sites. Promotes S-phase entry and DNA synthesis. The sequence is that of Serine protease FAM111A from Mus musculus (Mouse).